A 938-amino-acid polypeptide reads, in one-letter code: Microperfuranone synthase (938 aa).

The tract at residues threonine 44–valine 445 is adenylation (A) domain. In terms of domain architecture, Carrier spans serine 579–arginine 655. Residues serine 581–aspartate 652 form a thiolation and peptide carrier (T) domain region. At serine 613 the chain carries O-(pantetheine 4'-phosphoryl)serine. The interval proline 676–alanine 923 is thioesterase (TE) domain. Residue serine 746 is part of the active site.

It belongs to the ATP-dependent AMP-binding enzyme family.

It participates in secondary metabolite biosynthesis. Microperfuranone synthase is the only protein required for the biosynthesis of the secondary metabolite microperfuranone from phenylpyruvic acid (PPA). Several steps for the microperfuranione biosynthesis have been proposed. These steps include the activation of PPA, by the micA adenylation (A) domain to AMP-phenylpyruvic acid followed by loading of the PPA unit to the thiolation and peptide carrier (T) domain and eventually transferring to the thioesterase (TE) domain. After loading another PPA unit onto the T domain, aldol condensation establishes the carbon-carbon bond between the alpha- and beta-carbon of the two PPA units. Sulfur-assisted furan ring formation, TE domain mediated hydrolysis, decarboxylation, and keto-enol tautomerization would generate microperfuranone attached to the T domain. Finally, microperfuranone is released by the TE domain. The sequence is that of Microperfuranone synthase from Emericella nidulans (strain FGSC A4 / ATCC 38163 / CBS 112.46 / NRRL 194 / M139) (Aspergillus nidulans).